Consider the following 186-residue polypeptide: T-cell receptor-associated transmembrane adapter 1 (186 aa).

Residues 1–7 (MSGISGC) are Extracellular-facing. Residues 8 to 28 (PFFLWGLLALLGLALVISLIF) traverse the membrane as a helical; Signal-anchor for type III membrane protein segment. At 29 to 186 (NISHYVEKQR…LIRAKREPIN (158 aa)) the chain is on the cytoplasmic side. At S46 the chain carries Phosphoserine. Y79 is modified (phosphotyrosine). Positions 79 to 82 (YEQM) are interaction with PIK3R1. The tract at residues 116 to 140 (SVKGKRRKPRKQNTHFSDKDGDEQL) is disordered. Residues 118–128 (KGKRRKPRKQN) are compositionally biased toward basic residues. Basic and acidic residues predominate over residues 131 to 140 (FSDKDGDEQL).

As to quaternary structure, homodimer; disulfide-linked. Interacts with CD3Z. When phosphorylated, interacts with PIK3R1. Phosphorylated on tyrosines by LCK or FYN upon TCR activation. Strongly expressed in thymus, and to a lesser extent in spleen, lymph node and peripheral blood lymphocytes. Present in T-cells and NK cells, but not B-cells (at protein level).

Its subcellular location is the cell membrane. Its function is as follows. Stabilizes the TCR (T-cell antigen receptor)/CD3 complex at the surface of T-cells. The polypeptide is T-cell receptor-associated transmembrane adapter 1 (TRAT1) (Homo sapiens (Human)).